A 473-amino-acid chain; its full sequence is ATP synthase subunit beta (473 aa).

153 to 160 (GGAGVGKT) lines the ATP pocket.

Belongs to the ATPase alpha/beta chains family. F-type ATPases have 2 components, CF(1) - the catalytic core - and CF(0) - the membrane proton channel. CF(1) has five subunits: alpha(3), beta(3), gamma(1), delta(1), epsilon(1). CF(0) has three main subunits: a(1), b(2) and c(9-12). The alpha and beta chains form an alternating ring which encloses part of the gamma chain. CF(1) is attached to CF(0) by a central stalk formed by the gamma and epsilon chains, while a peripheral stalk is formed by the delta and b chains.

It localises to the cell membrane. It catalyses the reaction ATP + H2O + 4 H(+)(in) = ADP + phosphate + 5 H(+)(out). Produces ATP from ADP in the presence of a proton gradient across the membrane. The catalytic sites are hosted primarily by the beta subunits. This is ATP synthase subunit beta from Rickettsia africae (strain ESF-5).